We begin with the raw amino-acid sequence, 250 residues long: Petrobactin import ATP-binding protein FatE (250 aa).

The 235-residue stretch at 2–236 (IKIDNVKKFY…TLLTDIFETR (235 aa)) folds into the ABC transporter domain. Position 34–41 (34–41 (GPNGAGKS)) interacts with ATP.

Belongs to the ABC transporter superfamily. The complex is composed of two ATP-binding proteins (FatE), two transmembrane proteins (FatC and FatD) and a solute-binding protein (FpuA).

Its subcellular location is the cell membrane. It catalyses the reaction a Fe(III)-siderophore(out) + ATP + H2O = a Fe(III)-siderophore(in) + ADP + phosphate + H(+). Functionally, part of an ABC transporter complex involved in ferric-petrobactin uptake. Probably responsible for energy coupling to the transport system. This chain is Petrobactin import ATP-binding protein FatE, found in Bacillus anthracis.